We begin with the raw amino-acid sequence, 123 residues long: Highly acidic elicitin 20 (123 aa).

A signal peptide spans 1-20; sequence MQFTALFAATAVALVGSVSA. 3 disulfides stabilise this stretch: Cys23–Cys91, Cys47–Cys76, and Cys71–Cys115.

The protein belongs to the elicitin family.

It is found in the secreted. Functionally, induces local and distal defense responses (incompatible hypersensitive reaction) in plants from the solanaceae and cruciferae families. Elicits leaf necrosis and causes the accumulation of pathogenesis-related proteins. Might interact with the lipidic molecules of the plasma membrane. The sequence is that of Highly acidic elicitin 20 (B20) from Phytophthora cryptogea.